The sequence spans 503 residues: UDP-N-acetylmuramoylalanine--D-glutamate ligase (503 aa).

129 to 135 (GTNGKTT) contacts ATP.

Belongs to the MurCDEF family.

It localises to the cytoplasm. It catalyses the reaction UDP-N-acetyl-alpha-D-muramoyl-L-alanine + D-glutamate + ATP = UDP-N-acetyl-alpha-D-muramoyl-L-alanyl-D-glutamate + ADP + phosphate + H(+). It participates in cell wall biogenesis; peptidoglycan biosynthesis. In terms of biological role, cell wall formation. Catalyzes the addition of glutamate to the nucleotide precursor UDP-N-acetylmuramoyl-L-alanine (UMA). The chain is UDP-N-acetylmuramoylalanine--D-glutamate ligase from Burkholderia orbicola (strain MC0-3).